A 409-amino-acid chain; its full sequence is Z-DNA-binding protein 1 (409 aa).

Z-binding domains lie at 8–70 and 85–147; these read LGTG…SLGG and SAAQ…TIYR. Residues Lys17 and Lys43 each participate in a glycyl lysine isopeptide (Lys-Gly) (interchain with G-Cter in ubiquitin) cross-link. Residues 59–87 are disordered; the sequence is SSPAPATWSLGGDGASGDGAPEIPEDSAA. Short sequence motifs (RIP homotypic interaction motif (RHIM)) lie at residues 183-207 and 241-265; these read NSLI…RQTI and LIHL…LERD. 2 disordered regions span residues 269–307 and 323–369; these read HPIF…GGTT and GNNN…TPSD. Residues 270–290 show a composition bias toward low complexity; it reads PIFSFSSSPPESTTTADPETA. The segment covering 337–351 has biased composition (basic and acidic residues); the sequence is GTKESADSQELKEDT.

In terms of assembly, homodimer. Interacts (via RIP homotypic interaction motif) with RIPK3; leading to RIPK3 activation and necroptosis; interaction is enhanced by CASP6. Interacts (via RIP homotypic interaction motif) with RIPK1. Component of the AIM2 PANoptosome complex, a multiprotein complex that drives inflammatory cell death (PANoptosis). Post-translationally, ubiquitinated; polyubiquitinated following influenza A virus (IAV) infection. Phosphorylated.

The protein resides in the cytoplasm. The protein localises to the nucleus. Its activity is regulated as follows. ZBP1-dependent necroptosis is normally inhibited by RIPK1: RIPK1 inhibits the ZBP1-induced activation of RIPK3 via FADD-mediated recruitment of CASP8, which cleaves RIPK1 and limits TNF-induced necroptosis. Key innate sensor that recognizes and binds Z-RNA structures, which are produced by a number of viruses, such as herpesvirus, orthomyxovirus or flavivirus, and triggers different forms of cell death. ZBP1 acts as an essential mediator of pyroptosis, necroptosis and apoptosis (PANoptosis), an integral part of host defense against pathogens, by activating RIPK3, caspase-8 (CASP8), and the NLRP3 inflammasome. Key activator of necroptosis, a programmed cell death process in response to death-inducing TNF-alpha family members, via its ability to bind Z-RNA: once activated upon Z-RNA-binding, ZBP1 interacts and stimulates RIPK3 kinase, which phosphorylates and activates MLKL, triggering execution of programmed necrosis. In addition to TNF-induced necroptosis, necroptosis can also take place in the nucleus in response to orthomyxoviruses infection: ZBP1 recognizes and binds Z-RNA structures that are produced in infected nuclei by orthomyxoviruses, such as the influenza A virus (IAV), leading to ZBP1 activation, RIPK3 stimulation and subsequent MLKL phosphorylation, triggering disruption of the nuclear envelope and leakage of cellular DNA into the cytosol. ZBP1-dependent cell death in response to IAV infection promotes interleukin-1 alpha (IL1A) induction in an NLRP3-inflammasome-independent manner: IL1A expression is required for the optimal interleukin-1 beta (IL1B) production, and together, these cytokines promote infiltration of inflammatory neutrophils to the lung, leading to the formation of neutrophil extracellular traps. In addition to its direct role in driving necroptosis via its ability to sense Z-RNAs, also involved in PANoptosis triggered in response to bacterial infection: component of the AIM2 PANoptosome complex, a multiprotein complex that triggers PANoptosis. Also acts as the apical sensor of fungal infection responsible for activating PANoptosis. Involved in CASP8-mediated cell death via its interaction with RIPK1 but independently of its ability to sense Z-RNAs. In some cell types, also able to restrict viral replication by promoting cell death-independent responses. In response to flavivirus infection in neurons, promotes a cell death-independent pathway that restricts viral replication: together with RIPK3, promotes a death-independent transcriptional program that modifies the cellular metabolism via up-regulation expression of the enzyme ACOD1/IRG1 and production of the metabolite itaconate. Itaconate inhibits the activity of succinate dehydrogenase, generating a metabolic state in neurons that suppresses replication of viral genomes. The protein is Z-DNA-binding protein 1 of Rattus norvegicus (Rat).